A 324-amino-acid chain; its full sequence is Quinolinate synthase 2 (324 aa).

Residues histidine 48 and serine 66 each coordinate iminosuccinate. Cysteine 111 is a [4Fe-4S] cluster binding site. Residues 137 to 139 (YVN) and serine 154 contribute to the iminosuccinate site. Cysteine 196 is a [4Fe-4S] cluster binding site. Iminosuccinate contacts are provided by residues 222–224 (HPE) and threonine 239. Position 282 (cysteine 282) interacts with [4Fe-4S] cluster.

Belongs to the quinolinate synthase family. Type 2 subfamily. It depends on [4Fe-4S] cluster as a cofactor.

The protein localises to the cytoplasm. The catalysed reaction is iminosuccinate + dihydroxyacetone phosphate = quinolinate + phosphate + 2 H2O + H(+). The protein operates within cofactor biosynthesis; NAD(+) biosynthesis; quinolinate from iminoaspartate: step 1/1. Catalyzes the condensation of iminoaspartate with dihydroxyacetone phosphate to form quinolinate. The chain is Quinolinate synthase 2 from Mesorhizobium japonicum (strain LMG 29417 / CECT 9101 / MAFF 303099) (Mesorhizobium loti (strain MAFF 303099)).